Reading from the N-terminus, the 1497-residue chain is Collagen alpha-1(XVII) chain (1497 aa).

Disordered regions lie at residues 1-154 (MDVT…PSTR) and 167-186 (GSRS…LPIP). Residues 1 to 467 (MDVTKKNKRD…CGSCCSWWKW (467 aa)) are Cytoplasmic-facing. The nonhelical region (NC16) stretch occupies residues 1 to 566 (MDVTKKNKRD…MMEQENGNLR (566 aa)). Residues 9–19 (RDGTEVTERIV) show a composition bias toward basic and acidic residues. Composition is skewed to polar residues over residues 57 to 96 (LTHG…SPGS) and 169 to 183 (RSAS…SNTL). Positions 145 to 230 (RLQSASPSTR…WSSTLPAGSS (86 aa)) are necessary for interaction with DST and for the recruitment of DST to hemidesmosome. Residues 468–488 (LLGLLLTWLLLLGLLFGLIAL) form a helical; Signal-anchor for type II membrane protein membrane-spanning segment. Residues 489–1497 (AEEVRKLKAR…RRRRSIAVKP (1009 aa)) are Extracellular-facing. At S544 the chain carries Phosphoserine; by CK2. 3 disordered regions span residues 562 to 1011 (NGNL…SSSG), 1209 to 1234 (GLSF…VSGA), and 1261 to 1316 (SFIV…TGGG). The segment at 567 to 1482 (GSPGPKGDMG…KGEKGDKGDQ (916 aa)) is triple-helical region. The segment covering 590 to 602 (PGIPGPLGHPGPQ) has biased composition (pro residues). Low complexity-rich tracts occupy residues 604-635 (PKGQ…RGEA), 661-673 (PGSV…SGSP), 735-748 (EPGA…AGPD), and 774-796 (DPGK…PGRP). Pro residues-rich tracts occupy residues 820-841 (PGPP…PGPA), 858-881 (PPGP…PRGP), and 907-916 (PPGPPGPPGP). Low complexity-rich tracts occupy residues 936 to 946 (GFSTSGSSSFG) and 968 to 987 (PGVP…GSSS). Pro residues-rich tracts occupy residues 994 to 1004 (PPGPPGPPGPP), 1214 to 1228 (PGPP…PRGP), and 1266 to 1275 (PPGPPGPQGP). Residues 1289–1312 (SRGSSSSSHSSSVRRGSSYSSSMS) are compositionally biased toward low complexity. A glycan (N-linked (GlcNAc...) asparagine) is linked at N1421. The interval 1434–1497 (GAIQGPPGQK…RRRRSIAVKP (64 aa)) is disordered. The segment covering 1458–1469 (AGPPGHPGPPGP) has biased composition (pro residues). Positions 1472–1481 (HKGEKGDKGD) are enriched in basic and acidic residues. A nonhelical region (NC1) region spans residues 1483–1497 (VYAGRRRRRSIAVKP). Residues 1486–1497 (GRRRRRSIAVKP) are compositionally biased toward basic residues.

In terms of assembly, homotrimers of alpha 1(XVII)chains. Interacts (via cytoplasmic region) with ITGB4 (via cytoplasmic region). Interacts (via cytoplasmic region) with DST isoform 3 (via N-terminus). Interacts (via N-terminus) with PLEC. Interacts (via cytoplasmic region) with DSP. The intracellular/endo domain is disulfide-linked. Post-translationally, prolines at the third position of the tripeptide repeating unit (G-X-Y) are hydroxylated in some or all of the chains. In terms of processing, the ectodomain is shedded from the surface of keratinocytes resulting in a 120-kDa soluble form, also named as 120 kDa linear IgA disease antigen. The shedding is mediated by membrane-bound metalloproteases. This cleavage is inhibited by phosphorylation at Ser-544. As to expression, detected in skin. In the cornea, it is detected in the epithelial basement membrane, the epithelial cells, and at a lower level in stromal cells (at protein level). Stratified squamous epithelia. Found in hemidesmosomes. Expressed in cornea, oral mucosa, esophagus, intestine, kidney collecting ducts, ureter, bladder, urethra and thymus but is absent in lung, blood vessels, skeletal muscle and nerves.

It localises to the cell junction. Its subcellular location is the hemidesmosome. It is found in the membrane. The protein resides in the secreted. The protein localises to the extracellular space. It localises to the extracellular matrix. Its subcellular location is the basement membrane. May play a role in the integrity of hemidesmosome and the attachment of basal keratinocytes to the underlying basement membrane. In terms of biological role, the 120 kDa linear IgA disease antigen is an anchoring filament component involved in dermal-epidermal cohesion. Is the target of linear IgA bullous dermatosis autoantibodies. The polypeptide is Collagen alpha-1(XVII) chain (COL17A1) (Homo sapiens (Human)).